The primary structure comprises 637 residues: MNTGIIDLFDNHVDSIPTILPHQLATLDYLVRTIIDENRSVLLFHIMGSGKTIIALLFALVASRFKKVYILVPNINILKIFNYNMGVAMNLFNDEFIAENIFIHSTTSFYSLNYNDNVINYNGLSRYNNSIFIVDEAHNIFGNNTGELMTVIKNKNKIPFLLLSGSPITNTPNTLGHIIDLMSEETIDFGEIISRGKKVIQTLLNERGVNVLKDLLKGRISYYEMPDKDLPTIRYHGRKFLDTRVVYCHMSKLQEKDYMITRRQLCYHEMFDKNMYNVSMAVLGQLNLMNNLDTLFQEQDKELYPNLKINNGVLYGEELVTLNISSKFKYFINRIQTLKGKHFIYFSNSTYGGLVIKYIMLSNGYSEYNGSQGTNPHMINGKPKTFAIVTSKMKSSLEDLLDVYNSPENDDGNQLMFLFSSNIMSESYTLKEVRHIWFMTIPDTFSQYNQILGRSIRKFSYVDISEPVNVYLLAAVYSDFNDEVTSLNDYTQDELINVLPFDIKKLLYLKFKTKETNRIYSILQEMSETYSLPPHPSIVKVLLGELVRQFFYNNSRIKYNDSKLLKMVTSVIKNKEDARNYIDDIVNGHFFVSNKVFDKSLLYKYKNDIITVPFRLSYEPFVWGVNFRKEYNVVSSP.

It belongs to the helicase family. VETF subfamily. Heterodimer of a 70 kDa and a 82 kDa subunit. Part of the early transcription complex composed of ETF, RAP94/OPG109, and the DNA-directed RNA polymerase. In terms of processing, apparently non-glycosylated.

It localises to the virion. Functionally, acts with RNA polymerase to initiate transcription from early gene promoters. Is recruited by the RPO-associated protein of 94 kDa RAP94/OPG109 to form the early transcription complex, which also contains the core RNA polymerase. ETF heterodimer binds to early gene promoters. This Monkeypox virus protein is Early transcription factor 70 kDa subunit (OPG118).